A 184-amino-acid chain; its full sequence is Putative axial regulator YABBY 2 (184 aa).

The C4-type zinc-finger motif lies at 15–42; that stretch reads CSFCTTILAVSVPYASLFTLVTVRCGHC. Polar residues-rich tracts occupy residues 76–94 and 171–184; these read LVTR…NLSE and LDQS…NGYY. Disordered stretches follow at residues 76–115 and 162–184; these read LVTR…RQRV and LDGN…NGYY.

This sequence belongs to the YABBY family. In terms of assembly, interacts with SPL/NZZ and SPEAR2. As to expression, expressed at low levels in abaxial regions of lateral aerial organ primordia leading to cotyledons, leaves, flower meristems, sepals, petals, stamen and carpels, but not in roots.

Its subcellular location is the nucleus. In terms of biological role, involved in the abaxial cell fate determination during embryogenesis and organogenesis. This chain is Putative axial regulator YABBY 2 (YAB2), found in Arabidopsis thaliana (Mouse-ear cress).